Reading from the N-terminus, the 429-residue chain is Bifunctional protein GlmU (429 aa).

Residues 1-223 (MKTSILILAA…EDEFMGINDK (223 aa)) form a pyrophosphorylase region. Residues 8–11 (LAAG), Lys22, and 81–82 (GT) each bind UDP-N-acetyl-alpha-D-glucosamine. Residue Asp102 participates in Mg(2+) binding. UDP-N-acetyl-alpha-D-glucosamine is bound by residues Gly135, Glu149, Asn164, and Asn221. Residue Asn221 participates in Mg(2+) binding. Residues 224 to 244 (FELSIAENFMQKKIKKYWMQQ) are linker. The interval 245–429 (GVIFHLPQST…KDYYYKKFQK (185 aa)) is N-acetyltransferase. Arg308 and Lys325 together coordinate UDP-N-acetyl-alpha-D-glucosamine. Catalysis depends on His336, which acts as the Proton acceptor. UDP-N-acetyl-alpha-D-glucosamine is bound by residues Tyr339 and Asn350. Acetyl-CoA is bound by residues 359–360 (NY), Ser378, Ala396, and Arg413.

It in the N-terminal section; belongs to the N-acetylglucosamine-1-phosphate uridyltransferase family. In the C-terminal section; belongs to the transferase hexapeptide repeat family. Homotrimer. Mg(2+) serves as cofactor.

Its subcellular location is the cytoplasm. It catalyses the reaction alpha-D-glucosamine 1-phosphate + acetyl-CoA = N-acetyl-alpha-D-glucosamine 1-phosphate + CoA + H(+). The enzyme catalyses N-acetyl-alpha-D-glucosamine 1-phosphate + UTP + H(+) = UDP-N-acetyl-alpha-D-glucosamine + diphosphate. Its pathway is nucleotide-sugar biosynthesis; UDP-N-acetyl-alpha-D-glucosamine biosynthesis; N-acetyl-alpha-D-glucosamine 1-phosphate from alpha-D-glucosamine 6-phosphate (route II): step 2/2. The protein operates within nucleotide-sugar biosynthesis; UDP-N-acetyl-alpha-D-glucosamine biosynthesis; UDP-N-acetyl-alpha-D-glucosamine from N-acetyl-alpha-D-glucosamine 1-phosphate: step 1/1. It functions in the pathway bacterial outer membrane biogenesis; LPS lipid A biosynthesis. Its function is as follows. Catalyzes the last two sequential reactions in the de novo biosynthetic pathway for UDP-N-acetylglucosamine (UDP-GlcNAc). The C-terminal domain catalyzes the transfer of acetyl group from acetyl coenzyme A to glucosamine-1-phosphate (GlcN-1-P) to produce N-acetylglucosamine-1-phosphate (GlcNAc-1-P), which is converted into UDP-GlcNAc by the transfer of uridine 5-monophosphate (from uridine 5-triphosphate), a reaction catalyzed by the N-terminal domain. This Campylobacter jejuni subsp. jejuni serotype O:2 (strain ATCC 700819 / NCTC 11168) protein is Bifunctional protein GlmU.